The sequence spans 487 residues: Protein nucleotidyltransferase YdiU (487 aa).

ATP-binding residues include G90, G92, R93, K113, D125, G126, R176, and R183. D252 functions as the Proton acceptor in the catalytic mechanism. The Mg(2+) site is built by N253 and D262. D262 contributes to the ATP binding site.

Belongs to the SELO family. The cofactor is Mg(2+). Requires Mn(2+) as cofactor.

It carries out the reaction L-seryl-[protein] + ATP = 3-O-(5'-adenylyl)-L-seryl-[protein] + diphosphate. The catalysed reaction is L-threonyl-[protein] + ATP = 3-O-(5'-adenylyl)-L-threonyl-[protein] + diphosphate. The enzyme catalyses L-tyrosyl-[protein] + ATP = O-(5'-adenylyl)-L-tyrosyl-[protein] + diphosphate. It catalyses the reaction L-histidyl-[protein] + UTP = N(tele)-(5'-uridylyl)-L-histidyl-[protein] + diphosphate. It carries out the reaction L-seryl-[protein] + UTP = O-(5'-uridylyl)-L-seryl-[protein] + diphosphate. The catalysed reaction is L-tyrosyl-[protein] + UTP = O-(5'-uridylyl)-L-tyrosyl-[protein] + diphosphate. Nucleotidyltransferase involved in the post-translational modification of proteins. It can catalyze the addition of adenosine monophosphate (AMP) or uridine monophosphate (UMP) to a protein, resulting in modifications known as AMPylation and UMPylation. The polypeptide is Protein nucleotidyltransferase YdiU (Pseudomonas syringae pv. syringae (strain B728a)).